Here is a 172-residue protein sequence, read N- to C-terminus: Ribosome maturation factor RimM (172 aa).

In terms of domain architecture, PRC barrel spans 96–168 (EGEFYYHQII…RVDVELMEGL (73 aa)).

It belongs to the RimM family. Binds ribosomal protein uS19.

It localises to the cytoplasm. Functionally, an accessory protein needed during the final step in the assembly of 30S ribosomal subunit, possibly for assembly of the head region. Essential for efficient processing of 16S rRNA. May be needed both before and after RbfA during the maturation of 16S rRNA. It has affinity for free ribosomal 30S subunits but not for 70S ribosomes. This is Ribosome maturation factor RimM from Streptococcus pyogenes serotype M1.